Consider the following 260-residue polypeptide: uncharacterized protein (260 aa).

It belongs to the MG032/MG096/MG288 family.

This is an uncharacterized protein from Mycoplasma pneumoniae (strain ATCC 29342 / M129 / Subtype 1) (Mycoplasmoides pneumoniae).